The following is a 254-amino-acid chain: 2-dehydro-3-deoxy-D-gluconate 5-dehydrogenase (254 aa).

Tyr-159 functions as the Proton acceptor in the catalytic mechanism.

It belongs to the short-chain dehydrogenases/reductases (SDR) family.

It catalyses the reaction 2-dehydro-3-deoxy-D-gluconate + NAD(+) = 3-deoxy-D-glycero-2,5-hexodiulosonate + NADH + H(+). Its function is as follows. Involved in the degradation of 3,6-anhydro-L-galactose, which is the major monomeric sugar of red macroalgae. Catalyzes the fourth step of the pathway, the reduction of 3-deoxy-D-glycero-2,5-hexodiulosonate (L-DDGal) to 2-dehydro-3-deoxy-D-gluconate (KDG). This Pseudoalteromonas atlantica (strain T6c / ATCC BAA-1087) protein is 2-dehydro-3-deoxy-D-gluconate 5-dehydrogenase.